The sequence spans 113 residues: Large ribosomal subunit protein eL33 (113 aa).

It belongs to the eukaryotic ribosomal protein eL33 family.

This Tetrahymena thermophila (strain SB210) protein is Large ribosomal subunit protein eL33 (RPL35A).